Reading from the N-terminus, the 215-residue chain is uncharacterized protein (215 aa).

Catalysis depends on charge relay system residues Ser-114, Asp-162, and His-194.

The protein belongs to the AB hydrolase superfamily. AB hydrolase 2 family.

This is an uncharacterized protein from Rickettsia felis (strain ATCC VR-1525 / URRWXCal2) (Rickettsia azadi).